Here is a 146-residue protein sequence, read N- to C-terminus: Hemoglobin subunit beta (146 aa).

N-acetylvaline is present on valine 1. A Globin domain is found at 2–146; sequence HLTDGEKNAL…VANALAHKYH (145 aa). Residue serine 44 is modified to Phosphoserine. Lysine 59 carries the N6-acetyllysine modification. Residue histidine 63 participates in heme b binding. N6-acetyllysine is present on lysine 82. Histidine 92 contacts heme b. An S-nitrosocysteine modification is found at cysteine 93. Residue lysine 144 is modified to N6-acetyllysine.

It belongs to the globin family. In terms of assembly, heterotetramer of two alpha chains and two beta chains. In terms of tissue distribution, red blood cells.

In terms of biological role, involved in oxygen transport from the lung to the various peripheral tissues. In Otospermophilus beecheyi (California ground squirrel), this protein is Hemoglobin subunit beta.